The sequence spans 649 residues: Acetyl-coenzyme A synthetase (649 aa).

Residues 191 to 194, Thr311, and Asn335 each bind CoA; that span reads RGGR. Residues 387–389, 411–416, Asp500, and Arg515 contribute to the ATP site; these read GEP and DTWWQT. Residue Ser523 participates in CoA binding. Residue Arg526 participates in ATP binding. 3 residues coordinate Mg(2+): Val537, His539, and Ile542. Arg584 is a binding site for CoA. N6-acetyllysine is present on Lys609.

Belongs to the ATP-dependent AMP-binding enzyme family. Requires Mg(2+) as cofactor. Acetylated. Deacetylation by the SIR2-homolog deacetylase activates the enzyme.

It catalyses the reaction acetate + ATP + CoA = acetyl-CoA + AMP + diphosphate. Catalyzes the conversion of acetate into acetyl-CoA (AcCoA), an essential intermediate at the junction of anabolic and catabolic pathways. AcsA undergoes a two-step reaction. In the first half reaction, AcsA combines acetate with ATP to form acetyl-adenylate (AcAMP) intermediate. In the second half reaction, it can then transfer the acetyl group from AcAMP to the sulfhydryl group of CoA, forming the product AcCoA. In Psychromonas ingrahamii (strain DSM 17664 / CCUG 51855 / 37), this protein is Acetyl-coenzyme A synthetase.